A 746-amino-acid polypeptide reads, in one-letter code: Transcription factor pbcR (746 aa).

Positions 1–12 (MYPWSSTGTSPF) are enriched in polar residues. Positions 1-40 (MYPWSSTGTSPFSHPDNEGAESGDMSMGEEQQQPHQRRQK) are disordered. Positions 47-76 (CQSCRASKVRCDQPNPGMPCLRCQKSGKPC) form a DNA-binding region, zn(2)-C6 fungal-type. Residues 109–131 (ELQDSAGDGETAHSTALRSPSQL) form a disordered region. Residues 120–131 (AHSTALRSPSQL) are compositionally biased toward polar residues.

It is found in the nucleus. Transcription factor; part of the gene cluster that mediates the biosynthesis of the diterpene ent-pimara-8(14),15-diene (PD). Acts as a positive regulator for the cluster gene. Down-regulates the expression of the penicillin gene cluster, two putative polyketide clusters, and one putative nonribosomal peptide cluster. The chain is Transcription factor pbcR from Emericella nidulans (strain FGSC A4 / ATCC 38163 / CBS 112.46 / NRRL 194 / M139) (Aspergillus nidulans).